The chain runs to 36 residues: Cytochrome b6-f complex subunit 7 (36 aa).

The chain crosses the membrane as a helical span at residues 9-29 (NGAFIMIGLTLLGLAWGFVII).

This sequence belongs to the PetM family. In terms of assembly, the 4 large subunits of the cytochrome b6-f complex are cytochrome b6, subunit IV (17 kDa polypeptide, PetD), cytochrome f and the Rieske protein, while the 4 small subunits are PetG, PetL, PetM and PetN. The complex functions as a dimer.

The protein resides in the cellular thylakoid membrane. In terms of biological role, component of the cytochrome b6-f complex, which mediates electron transfer between photosystem II (PSII) and photosystem I (PSI), cyclic electron flow around PSI, and state transitions. The polypeptide is Cytochrome b6-f complex subunit 7 (Synechocystis sp. (strain ATCC 27184 / PCC 6803 / Kazusa)).